The following is a 114-amino-acid chain: Nucleoid-associated protein Tlet_0999 (114 aa).

This sequence belongs to the YbaB/EbfC family. As to quaternary structure, homodimer.

It is found in the cytoplasm. The protein resides in the nucleoid. Functionally, binds to DNA and alters its conformation. May be involved in regulation of gene expression, nucleoid organization and DNA protection. The sequence is that of Nucleoid-associated protein Tlet_0999 from Pseudothermotoga lettingae (strain ATCC BAA-301 / DSM 14385 / NBRC 107922 / TMO) (Thermotoga lettingae).